We begin with the raw amino-acid sequence, 396 residues long: Tryptophan synthase beta chain (396 aa).

Residue lysine 86 is modified to N6-(pyridoxal phosphate)lysine.

This sequence belongs to the TrpB family. As to quaternary structure, tetramer of two alpha and two beta chains. Pyridoxal 5'-phosphate is required as a cofactor.

It carries out the reaction (1S,2R)-1-C-(indol-3-yl)glycerol 3-phosphate + L-serine = D-glyceraldehyde 3-phosphate + L-tryptophan + H2O. It functions in the pathway amino-acid biosynthesis; L-tryptophan biosynthesis; L-tryptophan from chorismate: step 5/5. Its function is as follows. The beta subunit is responsible for the synthesis of L-tryptophan from indole and L-serine. In Proteus mirabilis (strain HI4320), this protein is Tryptophan synthase beta chain.